Reading from the N-terminus, the 207-residue chain is Urease accessory protein UreG (207 aa).

Residue 16-23 (GPVGSGKT) participates in GTP binding.

Belongs to the SIMIBI class G3E GTPase family. UreG subfamily. Homodimer. UreD, UreF and UreG form a complex that acts as a GTP-hydrolysis-dependent molecular chaperone, activating the urease apoprotein by helping to assemble the nickel containing metallocenter of UreC. The UreE protein probably delivers the nickel.

Its subcellular location is the cytoplasm. Facilitates the functional incorporation of the urease nickel metallocenter. This process requires GTP hydrolysis, probably effectuated by UreG. This Shewanella halifaxensis (strain HAW-EB4) protein is Urease accessory protein UreG.